The primary structure comprises 466 residues: ATP synthase subunit beta (466 aa).

Gly155–Thr162 contributes to the ATP binding site.

Belongs to the ATPase alpha/beta chains family. In terms of assembly, F-type ATPases have 2 components, CF(1) - the catalytic core - and CF(0) - the membrane proton channel. CF(1) has five subunits: alpha(3), beta(3), gamma(1), delta(1), epsilon(1). CF(0) has three main subunits: a(1), b(2) and c(9-12). The alpha and beta chains form an alternating ring which encloses part of the gamma chain. CF(1) is attached to CF(0) by a central stalk formed by the gamma and epsilon chains, while a peripheral stalk is formed by the delta and b chains.

It is found in the cell inner membrane. The enzyme catalyses ATP + H2O + 4 H(+)(in) = ADP + phosphate + 5 H(+)(out). In terms of biological role, produces ATP from ADP in the presence of a proton gradient across the membrane. The catalytic sites are hosted primarily by the beta subunits. The sequence is that of ATP synthase subunit beta from Bordetella bronchiseptica (strain ATCC BAA-588 / NCTC 13252 / RB50) (Alcaligenes bronchisepticus).